A 109-amino-acid chain; its full sequence is ATP-dependent Clp protease adapter protein ClpS (109 aa).

Residues 1-20 are disordered; it reads MAERKQGGQGNGVGSSVVTE.

This sequence belongs to the ClpS family. Binds to the N-terminal domain of the chaperone ClpA.

In terms of biological role, involved in the modulation of the specificity of the ClpAP-mediated ATP-dependent protein degradation. The sequence is that of ATP-dependent Clp protease adapter protein ClpS from Caulobacter vibrioides (strain NA1000 / CB15N) (Caulobacter crescentus).